A 394-amino-acid chain; its full sequence is Fatty acid resistance protein FarA (394 aa).

Residues 1–23 (MKSGNSEPNLMETHTDETKLQNT) are disordered. The chain crosses the membrane as a helical span at residues 33–53 (ALTLLFALSAAAAGSAFFLWW). The interval 356–376 (SAAGAPVSKTPGAALPEMEST) is disordered.

Belongs to the membrane fusion protein (MFP) (TC 8.A.1) family. Probably part of a tripartite efflux system FarAB-MtrE, which is composed of an inner membrane transporter, FarB, a periplasmic membrane fusion protein, FarA, and an outer membrane component, MtrE.

The protein localises to the cell inner membrane. Mediates resistance to long-chained antibacterial fatty acids (FAs). Function is dependent on the MtrE outer membrane protein. This is Fatty acid resistance protein FarA from Neisseria gonorrhoeae.